A 304-amino-acid polypeptide reads, in one-letter code: N-acetyl-D-glucosamine kinase (304 aa).

ATP-binding positions include 4 to 11 and 133 to 140; these read GFDMGGTK and GLGGGLVI. 4 residues coordinate Zn(2+): histidine 157, cysteine 177, cysteine 179, and cysteine 184.

The protein belongs to the ROK (NagC/XylR) family. NagK subfamily.

It catalyses the reaction N-acetyl-D-glucosamine + ATP = N-acetyl-D-glucosamine 6-phosphate + ADP + H(+). It participates in cell wall biogenesis; peptidoglycan recycling. Catalyzes the phosphorylation of N-acetyl-D-glucosamine (GlcNAc) derived from cell-wall degradation, yielding GlcNAc-6-P. The polypeptide is N-acetyl-D-glucosamine kinase (Pectobacterium atrosepticum (strain SCRI 1043 / ATCC BAA-672) (Erwinia carotovora subsp. atroseptica)).